Reading from the N-terminus, the 246-residue chain is Probable transcriptional regulatory protein RD1_2018 (246 aa).

Belongs to the TACO1 family.

The protein resides in the cytoplasm. The chain is Probable transcriptional regulatory protein RD1_2018 from Roseobacter denitrificans (strain ATCC 33942 / OCh 114) (Erythrobacter sp. (strain OCh 114)).